Reading from the N-terminus, the 550-residue chain is Calcium-dependent protein kinase 20 (550 aa).

Residues 1-58 are disordered; it reads MGNCCVTPEGSGRGRKKQQQEQKQKQKEPKQQQQQQKKGKKPNPFSIEYNRSSAPSGH. A lipid anchor (N-myristoyl glycine) is attached at Gly-2. Positions 18-30 are enriched in basic and acidic residues; that stretch reads QQQEQKQKQKEPK. A Protein kinase domain is found at 75–333; sequence YELGGELGRG…AQQVLDHPWL (259 aa). ATP-binding positions include 81 to 89 and Lys-104; that span reads LGRGEFGVT. The active-site Proton acceptor is Asp-199. An autoinhibitory domain region spans residues 339–369; the sequence is APNVNLGETVKARLQQFSVMNKFKKHALRVI. 4 consecutive EF-hand domains span residues 376 to 411, 412 to 447, 448 to 483, and 484 to 519; these read EEVA…LGHQ, MADA…LRKI, GNDE…DLGA, and NHEE…GTDW. Residues Asp-389, Asn-391, Asp-393, Met-395, Glu-400, Asp-425, Asp-427, Asn-429, Ser-431, Glu-436, Asp-461, Asn-463, Ser-465, Tyr-467, Glu-472, Asp-497, Asp-499, Asp-501, Lys-503, and Glu-508 each contribute to the Ca(2+) site.

This sequence belongs to the protein kinase superfamily. Ser/Thr protein kinase family. CDPK subfamily. In terms of tissue distribution, expressed in roots and leaf blades.

The protein resides in the membrane. The catalysed reaction is L-seryl-[protein] + ATP = O-phospho-L-seryl-[protein] + ADP + H(+). It carries out the reaction L-threonyl-[protein] + ATP = O-phospho-L-threonyl-[protein] + ADP + H(+). With respect to regulation, activated by calcium. Autophosphorylation may play an important role in the regulation of the kinase activity. In terms of biological role, may play a role in signal transduction pathways that involve calcium as a second messenger. The chain is Calcium-dependent protein kinase 20 from Oryza sativa subsp. japonica (Rice).